Reading from the N-terminus, the 225-residue chain is Uridylate kinase (225 aa).

9–10 (GS) lines the ATP pocket. Gly46 serves as a coordination point for UMP. 2 residues coordinate ATP: Gly47 and Arg51. Residues Asp67 and 115 to 121 (THPAHTT) each bind UMP. Thr141, Asn142, Tyr147, and Asp150 together coordinate ATP.

It belongs to the UMP kinase family. Homohexamer.

It is found in the cytoplasm. The enzyme catalyses UMP + ATP = UDP + ADP. Its pathway is pyrimidine metabolism; CTP biosynthesis via de novo pathway; UDP from UMP (UMPK route): step 1/1. With respect to regulation, inhibited by UTP. Catalyzes the reversible phosphorylation of UMP to UDP. In Methanococcus vannielii (strain ATCC 35089 / DSM 1224 / JCM 13029 / OCM 148 / SB), this protein is Uridylate kinase.